The sequence spans 645 residues: Cytoplasmic dynein 1 intermediate chain 1 (645 aa).

Composition is skewed to basic and acidic residues over residues 1–13 (MSDK…ELER) and 20–58 (QIRE…KRRE). 2 disordered regions span residues 1–58 (MSDK…KRRE) and 96–125 (MSPS…RTLQ). Ser2 carries the post-translational modification N-acetylserine. Positions 2–123 (SDKSDLKAEL…SGDLGPLTRT (122 aa)) are interaction with DCTN1. 2 positions are modified to phosphoserine: Ser50 and Ser100. A compositionally biased stretch (low complexity) spans 96-107 (MSPSSKSVSTPS). A Phosphothreonine modification is found at Thr105. Phosphoserine occurs at positions 107, 111, and 114. Residues 147–163 (KLGVSKVTQVDFLPREV) form an interaction with DYNLT1 region. The interval 169 to 221 (ETQTPLATHQSEEDEEDEEMVESKVGQDSELENQDKKQEVKEAPPRELTEEEK) is disordered. Thr176 bears the Phosphothreonine mark. A phosphoserine mark is found at Ser179 and Ser197. The span at 189-221 (VESKVGQDSELENQDKKQEVKEAPPRELTEEEK) shows a compositional bias: basic and acidic residues. WD repeat units lie at residues 285-334 (SKHR…TTPE), 338-378 (HCQS…RTPV), 387-428 (AHTH…TPQE), 437-477 (SKPV…AGIG), 482-527 (GHQG…PLYS), 530-570 (DNAD…EVPT), and 576-615 (EGAS…VPHN). Ser635 is subject to Phosphoserine.

This sequence belongs to the dynein intermediate chain family. As to quaternary structure, homodimer. The cytoplasmic dynein 1 complex consists of two catalytic heavy chains (HCs) and a number of non-catalytic subunits presented by intermediate chains (ICs), light intermediate chains (LICs) and light chains (LCs); the composition seems to vary in respect to the IC, LIC and LC composition. The heavy chain homodimer serves as a scaffold for the probable homodimeric assembly of the respective non-catalytic subunits. The ICs and LICs bind directly to the HC dimer and the LCs assemble on the IC dimer. Interacts with DYNC1H1. Interacts with DYNLT1 and DYNLT3. Interacts with DCTN1. Interacts with MCRS1; the interaction is required for the proper distribution of centriolar satellites.

The protein resides in the cytoplasm. The protein localises to the chromosome. It is found in the centromere. It localises to the kinetochore. Its subcellular location is the cytoskeleton. The protein resides in the spindle pole. Its function is as follows. Acts as one of several non-catalytic accessory components of the cytoplasmic dynein 1 complex that are thought to be involved in linking dynein to cargos and to adapter proteins that regulate dynein function. Cytoplasmic dynein 1 acts as a motor for the intracellular retrograde motility of vesicles and organelles along microtubules. The intermediate chains mediate the binding of dynein to dynactin via its 150 kDa component (p150-glued) DCTN1. May play a role in mediating the interaction of cytoplasmic dynein with membranous organelles and kinetochores. In Homo sapiens (Human), this protein is Cytoplasmic dynein 1 intermediate chain 1 (DYNC1I1).